We begin with the raw amino-acid sequence, 83 residues long: Protein CASPARIAN STRIP INTEGRITY FACTOR 2 (83 aa).

Residues 1-28 (MGLLPLVKKLGFIIFLLVSASAFALCSA) form the signal peptide. The tract at residues 61 to 83 (SRDYGHSSPKPKLVRPPFKLIPN) is disordered. Y64 bears the Sulfotyrosine mark. Residues P69 and P71 each carry the hydroxyproline modification.

Interacts with the specific receptor kinases GSO1 and GSO2. Expressed exclusively in the root stele.

In terms of biological role, peptide hormone required for contiguous Casparian strip diffusion barrier formation in roots via the regulation of CASPs protein expression and distribution in a GSO1-GSO2 signaling pathway. The Casparian strip is required for ion homeostasis (e.g. iron and potassium ions). This Arabidopsis thaliana (Mouse-ear cress) protein is Protein CASPARIAN STRIP INTEGRITY FACTOR 2.